Reading from the N-terminus, the 677-residue chain is WD repeat-containing protein 48 (677 aa).

Tyr28 carries the post-translational modification Phosphotyrosine. WD repeat units follow at residues 28–67, 73–112, 115–154, 166–205, 208–247, 250–289, 292–334, and 358–452; these read YNRN…QDPY, HHTD…CMST, THKD…ALTA, GNKD…KLMK, GHTD…CIAT, VHDE…IRVL, EEKA…NFRA, and KGGA…GFSS. Lys214 is subject to N6-acetyllysine. An N6-acetyllysine modification is found at Lys578. Residues 607 to 628 form a disordered region; it reads LDNESQTTSSSNNEKPGEQEKE. The segment covering 609–620 has biased composition (low complexity); sequence NESQTTSSSNNE. Phosphothreonine is present on Thr613.

This sequence belongs to the WD repeat WDR48 family. As to quaternary structure, interacts with USP46. Interacts with USP1. Interacts with USP12. Component of the USP12-WDR20-WDR48 deubiquitinating complex. Component of the USP12-DMWD-WDR48 deubiquitinating complex. Interacts with PHLPP1. Interacts with RAD51AP1; the interaction is direct and promotes formation of a trimeric complex with RAD51 via RAD51AP1. Interacts with ATAD5; the interaction regulates USP1-mediated PCNA deubiquitination. Interacts with RAD51; the interaction is enhanced under replication stress. Interacts with ITCH; the interaction is more efficient when both USP12 and WDR48/UAF1 are involved and may facilitate recruitment of the USP12 deubiquitinating complex to Notch.

Its subcellular location is the nucleus. The protein resides in the cytoplasm. It localises to the lysosome. It is found in the late endosome. Functionally, regulator of deubiquitinating complexes, which acts as a strong activator of USP1, USP12 and USP46. Enhances the USP1-mediated deubiquitination of FANCD2; USP1 being almost inactive by itself. Activates deubiquitination by increasing the catalytic turnover without increasing the affinity of deubiquitinating enzymes for the substrate. Also activates deubiquitinating activity of complexes containing USP12. Docks at the distal end of the USP12 fingers domain and induces a cascade of structural changes leading to the activation of the enzyme. Together with RAD51AP1, promotes DNA repair by stimulating RAD51-mediated homologous recombination. Binds single-stranded DNA (ssDNA) and double-stranded DNA (dsDNA). DNA-binding is required both for USP1-mediated deubiquitination of FANCD2 and stimulation of RAD51-mediated homologous recombination: both WDR48/UAF1 and RAD51AP1 have coordinated role in DNA-binding during these processes. Together with ATAD5 and by regulating USP1 activity, has a role in PCNA-mediated translesion synthesis (TLS) by deubiquitinating monoubiquitinated PCNA. Together with ATAD5, has a role in recruiting RAD51 to stalled forks during replication stress. This is WD repeat-containing protein 48 (WDR48) from Pongo abelii (Sumatran orangutan).